Consider the following 447-residue polypeptide: Dihydroorotase (447 aa).

Zn(2+) contacts are provided by His-81 and His-83. Residues His-83 to Arg-85 and Asn-115 each bind substrate. Zn(2+) is bound by residues Asp-171, His-198, and His-252. Substrate is bound at residue Asn-298. Asp-325 provides a ligand contact to Zn(2+). Asp-325 is an active-site residue. Residues His-329 and Phe-343–Gly-344 contribute to the substrate site.

The protein belongs to the metallo-dependent hydrolases superfamily. DHOase family. Class I DHOase subfamily. Requires Zn(2+) as cofactor.

The catalysed reaction is (S)-dihydroorotate + H2O = N-carbamoyl-L-aspartate + H(+). It participates in pyrimidine metabolism; UMP biosynthesis via de novo pathway; (S)-dihydroorotate from bicarbonate: step 3/3. Catalyzes the reversible cyclization of carbamoyl aspartate to dihydroorotate. This chain is Dihydroorotase, found in Ehrlichia canis (strain Jake).